Here is a 276-residue protein sequence, read N- to C-terminus: Glutamate racemase (276 aa).

Residues 10–11 (DS) and 42–43 (YG) each bind substrate. Cys-74 serves as the catalytic Proton donor/acceptor. Position 75-76 (75-76 (NT)) interacts with substrate. Cys-185 (proton donor/acceptor) is an active-site residue. Position 186–187 (186–187 (TH)) interacts with substrate.

Belongs to the aspartate/glutamate racemases family.

It catalyses the reaction L-glutamate = D-glutamate. It functions in the pathway cell wall biogenesis; peptidoglycan biosynthesis. In terms of biological role, provides the (R)-glutamate required for cell wall biosynthesis. This Levilactobacillus brevis (Lactobacillus brevis) protein is Glutamate racemase.